We begin with the raw amino-acid sequence, 646 residues long: Exoribonuclease 2 (646 aa).

An RNB domain is found at 191–518; that stretch reads RIDLTALDFV…NHRLLKAIIQ (328 aa). Residues 563–645 enclose the S1 motif domain; sequence DKTFSAEIVD…ETRNIVARPV (83 aa).

Belongs to the RNR ribonuclease family. RNase II subfamily.

Its subcellular location is the cytoplasm. It catalyses the reaction Exonucleolytic cleavage in the 3'- to 5'-direction to yield nucleoside 5'-phosphates.. Its function is as follows. Involved in mRNA degradation. Hydrolyzes single-stranded polyribonucleotides processively in the 3' to 5' direction. The chain is Exoribonuclease 2 from Xenorhabdus bovienii (strain SS-2004) (Xenorhabdus nematophila subsp. bovienii).